The primary structure comprises 639 residues: 3D-(3,5/4)-trihydroxycyclohexane-1,2-dione hydrolase (639 aa).

Residue Glu-62 participates in thiamine diphosphate binding. Residues 438–518 (SLPGDLQRMW…INILLFDNCG (81 aa)) are thiamine pyrophosphate binding. Residues Asp-489 and Asn-516 each contribute to the Mg(2+) site.

This sequence belongs to the TPP enzyme family. The cofactor is Mg(2+). It depends on thiamine diphosphate as a cofactor.

It carries out the reaction 3D-3,5/4-trihydroxycyclohexane-1,2-dione + H2O = 5-deoxy-D-glucuronate + H(+). It functions in the pathway polyol metabolism; myo-inositol degradation into acetyl-CoA; acetyl-CoA from myo-inositol: step 3/7. Functionally, involved in the cleavage of the C1-C2 bond of 3D-(3,5/4)-trihydroxycyclohexane-1,2-dione (THcHDO) to yield 5-deoxy-glucuronate (5DG). This is 3D-(3,5/4)-trihydroxycyclohexane-1,2-dione hydrolase from Clostridium perfringens (strain 13 / Type A).